An 886-amino-acid chain; its full sequence is Alanine--tRNA ligase (886 aa).

Histidine 564, histidine 568, cysteine 666, and histidine 670 together coordinate Zn(2+).

This sequence belongs to the class-II aminoacyl-tRNA synthetase family. Zn(2+) serves as cofactor.

The protein resides in the cytoplasm. It catalyses the reaction tRNA(Ala) + L-alanine + ATP = L-alanyl-tRNA(Ala) + AMP + diphosphate. In terms of biological role, catalyzes the attachment of alanine to tRNA(Ala) in a two-step reaction: alanine is first activated by ATP to form Ala-AMP and then transferred to the acceptor end of tRNA(Ala). Also edits incorrectly charged Ser-tRNA(Ala) and Gly-tRNA(Ala) via its editing domain. This Prochlorococcus marinus (strain MIT 9312) protein is Alanine--tRNA ligase.